We begin with the raw amino-acid sequence, 58 residues long: Small ribosomal subunit protein bS21 (58 aa).

The interval 25 to 58 (SKSGTLQEYRKREHYEKPSVKRKKKSEAARKRKF) is disordered. The span at 32–43 (EYRKREHYEKPS) shows a compositional bias: basic and acidic residues. Basic residues predominate over residues 44–58 (VKRKKKSEAARKRKF).

The protein belongs to the bacterial ribosomal protein bS21 family.

This Oceanobacillus iheyensis (strain DSM 14371 / CIP 107618 / JCM 11309 / KCTC 3954 / HTE831) protein is Small ribosomal subunit protein bS21.